A 591-amino-acid polypeptide reads, in one-letter code: Metalloendopeptidase OPG085 (591 aa).

Histidine 41 contributes to the Zn(2+) binding site. Glutamate 44 is an active-site residue. Histidine 45 and glutamate 112 together coordinate Zn(2+).

It belongs to the peptidase M44 family. Zn(2+) is required as a cofactor. Post-translationally, undergoes proteolytic processing during the course of infection. May be cleaved into 46 kDa and 22 kDa products (Potential).

The protein localises to the virion. Probably involved in maturation of some viral proteins by processing them preferentially at Ala-Gly-|-Ser/Thr/Lys motifs. Does not seem to be responsible for the cleavage of major core proteins. The chain is Metalloendopeptidase OPG085 (OPG085) from Homo sapiens (Human).